The primary structure comprises 315 residues: Methionyl-tRNA formyltransferase (315 aa).

110 to 113 provides a ligand contact to (6S)-5,6,7,8-tetrahydrofolate; that stretch reads SLLP.

It belongs to the Fmt family.

The catalysed reaction is L-methionyl-tRNA(fMet) + (6R)-10-formyltetrahydrofolate = N-formyl-L-methionyl-tRNA(fMet) + (6S)-5,6,7,8-tetrahydrofolate + H(+). Attaches a formyl group to the free amino group of methionyl-tRNA(fMet). The formyl group appears to play a dual role in the initiator identity of N-formylmethionyl-tRNA by promoting its recognition by IF2 and preventing the misappropriation of this tRNA by the elongation apparatus. The sequence is that of Methionyl-tRNA formyltransferase from Mycolicibacterium paratuberculosis (strain ATCC BAA-968 / K-10) (Mycobacterium paratuberculosis).